We begin with the raw amino-acid sequence, 646 residues long: Microtubule-associated protein 9 (646 aa).

An N-acetylserine modification is found at Ser2. Tyr12 is modified (phosphotyrosine). Disordered regions lie at residues 75-226, 242-418, 491-511, 531-554, 570-597, and 609-646; these read DFHI…QTEE, SLTS…LEPD, RLEEKNKKKTEEENAMRKGEA, RREKEYERAKKQKEEEAVAEKKKD, LKQKEKEKINERRKEELKRAEKKDKDKQ, and KERQERIERKQKKRHSFLESETHPPWSPPSRTAPSKVF. 2 stretches are compositionally biased toward polar residues: residues 105 to 119 and 157 to 167; these read ALDSSTPGSEGSSPD and RSTSSGETSSG. The span at 188-204 shows a compositional bias: basic and acidic residues; sequence SHTEEGVRPGVDKEHSI. Polar residues-rich tracts occupy residues 205 to 222, 280 to 291, and 330 to 340; these read SEASAPTPSLPRQNGTEL, LLSNENEGSSVL, and PLLSTSPSVIT. Over residues 346–357 the composition is skewed to basic and acidic residues; sequence EPAKKANEDRNT. The segment covering 386-398 has biased composition (polar residues); that stretch reads TKRSPSAATSSHY. Residues 405-418 are compositionally biased toward basic and acidic residues; that stretch reads LDQKQPRKQSLEPD. Residues 442–596 adopt a coiled-coil conformation; the sequence is MHRIKRIESE…KRAEKKDKDK (155 aa). The segment covering 637–646 has biased composition (polar residues); that stretch reads PSRTAPSKVF.

Binds to purified microtubules via its C-terminus.

Its subcellular location is the cytoplasm. The protein localises to the cytoskeleton. It localises to the spindle. Its function is as follows. Involved in organization of the bipolar mitotic spindle. Required for bipolar spindle assembly, mitosis progression and cytokinesis. May act by stabilizing interphase microtubules. The protein is Microtubule-associated protein 9 (Map9) of Mus musculus (Mouse).